A 1597-amino-acid polypeptide reads, in one-letter code: Pentafunctional AROM polypeptide (1597 aa).

The 3-dehydroquinate synthase stretch occupies residues 1-384 (MGVPTKISIL…HEPRASTVSN (384 aa)). Residues 44 to 46 (DTN), 81 to 84 (ESSK), 114 to 116 (GGV), and Asp119 contribute to the NAD(+) site. Arg130 contacts 7-phospho-2-dehydro-3-deoxy-D-arabino-heptonate. An NAD(+)-binding site is contributed by 139–140 (TT). 2 residues coordinate 7-phospho-2-dehydro-3-deoxy-D-arabino-heptonate: Asp146 and Lys152. Lys161 contacts NAD(+). Asn162 lines the 7-phospho-2-dehydro-3-deoxy-D-arabino-heptonate pocket. NAD(+) contacts are provided by residues 179-182 (FLNT) and Asn190. Glu194 provides a ligand contact to Zn(2+). 7-phospho-2-dehydro-3-deoxy-D-arabino-heptonate contacts are provided by residues 194–197 (EVIK) and Lys250. Glu260 acts as the Proton acceptor; for 3-dehydroquinate synthase activity in catalysis. Residues 264–268 (RNLLN) and His271 each bind 7-phospho-2-dehydro-3-deoxy-D-arabino-heptonate. His271 contributes to the Zn(2+) binding site. His275 functions as the Proton acceptor; for 3-dehydroquinate synthase activity in the catalytic mechanism. 2 residues coordinate 7-phospho-2-dehydro-3-deoxy-D-arabino-heptonate: His287 and Lys356. His287 contacts Zn(2+). Residues 397 to 842 (VSPGVPKNLN…WDSLAQTFKV (446 aa)) are EPSP synthase. Cys824 functions as the For EPSP synthase activity in the catalytic mechanism. Positions 866–1057 (ASIFIIGMRG…RSKENTFFVS (192 aa)) are shikimate kinase. Position 872-879 (872-879 (GMRGAGKT)) interacts with ATP. The interval 1058 to 1278 (LTLPDLAPAA…AAPGQLSARE (221 aa)) is 3-dehydroquinase. The active-site Proton acceptor; for 3-dehydroquinate dehydratase activity is the His1181. Lys1209 functions as the Schiff-base intermediate with substrate; for 3-dehydroquinate dehydratase activity in the catalytic mechanism. The interval 1291-1597 (SKKFAVIGNP…VQPKDDDIST (307 aa)) is shikimate dehydrogenase.

This sequence in the N-terminal section; belongs to the sugar phosphate cyclases superfamily. Dehydroquinate synthase family. In the 2nd section; belongs to the EPSP synthase family. The protein in the 3rd section; belongs to the shikimate kinase family. It in the 4th section; belongs to the type-I 3-dehydroquinase family. This sequence in the C-terminal section; belongs to the shikimate dehydrogenase family. In terms of assembly, homodimer. The cofactor is Zn(2+).

It is found in the cytoplasm. The enzyme catalyses 7-phospho-2-dehydro-3-deoxy-D-arabino-heptonate = 3-dehydroquinate + phosphate. It catalyses the reaction 3-dehydroquinate = 3-dehydroshikimate + H2O. It carries out the reaction shikimate + NADP(+) = 3-dehydroshikimate + NADPH + H(+). The catalysed reaction is shikimate + ATP = 3-phosphoshikimate + ADP + H(+). The enzyme catalyses 3-phosphoshikimate + phosphoenolpyruvate = 5-O-(1-carboxyvinyl)-3-phosphoshikimate + phosphate. Its pathway is metabolic intermediate biosynthesis; chorismate biosynthesis; chorismate from D-erythrose 4-phosphate and phosphoenolpyruvate: step 2/7. It functions in the pathway metabolic intermediate biosynthesis; chorismate biosynthesis; chorismate from D-erythrose 4-phosphate and phosphoenolpyruvate: step 3/7. It participates in metabolic intermediate biosynthesis; chorismate biosynthesis; chorismate from D-erythrose 4-phosphate and phosphoenolpyruvate: step 4/7. The protein operates within metabolic intermediate biosynthesis; chorismate biosynthesis; chorismate from D-erythrose 4-phosphate and phosphoenolpyruvate: step 5/7. Its pathway is metabolic intermediate biosynthesis; chorismate biosynthesis; chorismate from D-erythrose 4-phosphate and phosphoenolpyruvate: step 6/7. The AROM polypeptide catalyzes 5 consecutive enzymatic reactions in prechorismate polyaromatic amino acid biosynthesis. This Blastomyces gilchristii (strain SLH14081) (Blastomyces dermatitidis) protein is Pentafunctional AROM polypeptide.